We begin with the raw amino-acid sequence, 424 residues long: D-inositol 3-phosphate glycosyltransferase (424 aa).

Histidine 21 contacts 1D-myo-inositol 3-phosphate. UDP-N-acetyl-alpha-D-glucosamine is bound by residues 27–28 (QP) and glycine 35. 1D-myo-inositol 3-phosphate contacts are provided by residues 32–37 (DAGGMN), lysine 90, tyrosine 123, threonine 147, and arginine 167. Residues arginine 241, lysine 246, and glutamine 299 each contribute to the UDP-N-acetyl-alpha-D-glucosamine site. Mg(2+) contacts are provided by phenylalanine 308, glutamine 309, and alanine 311. The UDP-N-acetyl-alpha-D-glucosamine site is built by glutamate 321 and glutamate 329. Threonine 335 is a binding site for Mg(2+).

This sequence belongs to the glycosyltransferase group 1 family. MshA subfamily. Homodimer.

The catalysed reaction is 1D-myo-inositol 3-phosphate + UDP-N-acetyl-alpha-D-glucosamine = 1D-myo-inositol 2-acetamido-2-deoxy-alpha-D-glucopyranoside 3-phosphate + UDP + H(+). Catalyzes the transfer of a N-acetyl-glucosamine moiety to 1D-myo-inositol 3-phosphate to produce 1D-myo-inositol 2-acetamido-2-deoxy-glucopyranoside 3-phosphate in the mycothiol biosynthesis pathway. The protein is D-inositol 3-phosphate glycosyltransferase of Mycobacterium avium (strain 104).